The sequence spans 312 residues: Ribosomal RNA small subunit methyltransferase H (312 aa).

S-adenosyl-L-methionine-binding positions include 33–35 (GGH), D52, F81, D102, and Q109.

The protein belongs to the methyltransferase superfamily. RsmH family.

It localises to the cytoplasm. It carries out the reaction cytidine(1402) in 16S rRNA + S-adenosyl-L-methionine = N(4)-methylcytidine(1402) in 16S rRNA + S-adenosyl-L-homocysteine + H(+). Functionally, specifically methylates the N4 position of cytidine in position 1402 (C1402) of 16S rRNA. This is Ribosomal RNA small subunit methyltransferase H from Leuconostoc mesenteroides subsp. mesenteroides (strain ATCC 8293 / DSM 20343 / BCRC 11652 / CCM 1803 / JCM 6124 / NCDO 523 / NBRC 100496 / NCIMB 8023 / NCTC 12954 / NRRL B-1118 / 37Y).